A 371-amino-acid chain; its full sequence is Peptide chain release factor 2 (371 aa).

An N5-methylglutamine modification is found at glutamine 253.

This sequence belongs to the prokaryotic/mitochondrial release factor family. Methylated by PrmC. Methylation increases the termination efficiency of RF2.

The protein localises to the cytoplasm. Its function is as follows. Peptide chain release factor 2 directs the termination of translation in response to the peptide chain termination codons UGA and UAA. This chain is Peptide chain release factor 2 (prfB), found in Mycobacterium bovis (strain ATCC BAA-935 / AF2122/97).